Reading from the N-terminus, the 381-residue chain is Selenoprotein P (381 aa).

A signal peptide spans 1–19 (MWRSLGLALALCLLPLGGT). Residue Asn46 is glycosylated (N-linked (GlcNAc...) asparagine). A non-standard amino acid (selenocysteine) is located at residue Sec59. Asn83, Asn119, and Asn128 each carry an N-linked (GlcNAc...) asparagine glycan. The disordered stretch occupies residues 202 to 268 (SPHYHHEHHH…ENRDMPGSED (67 aa)). Over residues 204–217 (HYHHEHHHNHRHQH) the composition is skewed to basic residues. A compositionally biased stretch (polar residues) spans 218–229 (LGSSELSENQQP). Basic residues predominate over residues 243–255 (LHHHHKHKGQHRQ). At Ser266 the chain carries Phosphoserine. Non-standard amino acids (selenocysteine) are located at Sec318 and Sec330. Residue Asn338 is glycosylated (N-linked (GlcNAc...) asparagine). Residues Sec345, Sec352, Sec367, Sec369, Sec376, and Sec378 are each a non-standard amino acid (selenocysteine). Residues 352 to 381 (UQISQQLIPTEASTSURUKNQAKKUEUPSN) form a disordered region. Polar residues predominate over residues 353-369 (QISQQLIPTEASTSURU).

The protein belongs to the selenoprotein P family. In terms of processing, phosphorylation sites are present in the extracellular medium.

It localises to the secreted. Its function is as follows. Might be responsible for some of the extracellular antioxidant defense properties of selenium or might be involved in the transport of selenium. May supply selenium to tissues such as brain and testis. This chain is Selenoprotein P, found in Pongo abelii (Sumatran orangutan).